The sequence spans 273 residues: Large ribosomal subunit protein uL2 (273 aa).

The tract at residues 221–273 (RGTAMNPVDHPHGGGEGRNFGKHPVTPWGIQTKGKKTRSNKRTDKFIVRRRSK) is disordered.

It belongs to the universal ribosomal protein uL2 family. In terms of assembly, part of the 50S ribosomal subunit. Forms a bridge to the 30S subunit in the 70S ribosome.

In terms of biological role, one of the primary rRNA binding proteins. Required for association of the 30S and 50S subunits to form the 70S ribosome, for tRNA binding and peptide bond formation. It has been suggested to have peptidyltransferase activity; this is somewhat controversial. Makes several contacts with the 16S rRNA in the 70S ribosome. This Sodalis glossinidius (strain morsitans) protein is Large ribosomal subunit protein uL2.